The sequence spans 1017 residues: MDGREYSPAATTSENGGGRRKQKEKELDELKKEVNLDDHKLSLDELGRKYQVDLSRGLSNARAAEVLAQDGPNALTPPPTTPEWVKFCRQLFGGFSILLWIGAILCFLAYGIQAAMEDEPSNDNLYLGVVLAAVVIVTGCFSYYQEAKSSKIMDSFKNMVPQQALVIREGEKIQINAENVVVGDLVEVKGGDRVPADMRIISSHGCKVDNSSLTGESEPQTRSPEFTHENPLETRNICFFSTNCVEGTARGIVISTGDRTVMGRIASLASGLEVGRTPIAMEIEHFIRLITGVAVFLGLSFFILSLILGYTWLEAVIFLIGIIVANVPEGLLATVTVCLTLTAKRMARKNCLVKNLEAVETLGSTSTICSDKTGTLTQNRMTVAHMWFDNQIHEADTTEDQSGATFDKRSPTWAALSRIAGLCNRAVFKPGQENISISKRDTAGDASESALLKCIQLSCGSVKKMRDKNPKVTEIPFNSTNKYQLSIHEREEDPQGHILVMKGAPERILERCSRILLQGQEVPLDEEMKEAFQNAYLELGGLGERVLGFCHLYLPPDKFPRGFRFDADEVNFPTSDLCFVGLMSMIDPPRAAVPDAVGKCRSAGIKVIMVTGDHPITAKAIAKGVGIISEGNETVEDIAARLNIPVSQVNPREAKACVVHGSDLKDMTAEQLDEILRNHTEIVFARTSPQQKLIIVEGCQRQGAIVAVTGDGVNDSPALKKADIGIAMGIAGSDVSKQAADMILLDDNFASIVTGVEEGRLIFDNLKKSIAYTLTSNIPEITPFLLFIIANIPLPLGTVTILCIDLGTDMVPAISLAYEAAESDIMKRQPRNPRTDKLVNERLISMAYGQIGMIQALGGFFTYFVILAENGFLPARLLGVRLAWDDRSTNDLEDSYGQEWTYEQRKVVEFTCHTAFFASIVVVQWADLIICKTRRNSVFQQGMKNKILIFGLLEETALAAFLSYCPGMGVALRMYPLKVTWWFCAFPYSLLIFAYDEVRKLILRRYPGGWVEKETYY.

A disordered region spans residues 1–31 (MDGREYSPAATTSENGGGRRKQKEKELDELK). The Cytoplasmic segment spans residues 1–82 (MDGREYSPAA…NALTPPPTTP (82 aa)). The tract at residues 77–79 (PPP) is interaction with phosphoinositide-3 kinase. A helical transmembrane segment spans residues 83 to 103 (EWVKFCRQLFGGFSILLWIGA). Topologically, residues 104–126 (ILCFLAYGIQAAMEDEPSNDNLY) are extracellular. A helical transmembrane segment spans residues 127-147 (LGVVLAAVVIVTGCFSYYQEA). Residues 148–283 (KSSKIMDSFK…VGRTPIAMEI (136 aa)) are Cytoplasmic-facing. Residues 207–228 (KVDNSSLTGESEPQTRSPEFTH) are disordered. The span at 209–224 (DNSSLTGESEPQTRSP) shows a compositional bias: polar residues. Residues 284–303 (EHFIRLITGVAVFLGLSFFI) traverse the membrane as a helical segment. Residues 304 to 315 (LSLILGYTWLEA) lie on the Extracellular side of the membrane. Residues 316–333 (VIFLIGIIVANVPEGLLA) traverse the membrane as a helical segment. Over 334–766 (TVTVCLTLTA…EEGRLIFDNL (433 aa)) the chain is Cytoplasmic. The 4-aspartylphosphate intermediate role is filled by D371. K502 is an ATP binding site. Residues D711 and D715 each contribute to the Mg(2+) site. Residues 767-786 (KKSIAYTLTSNIPEITPFLL) traverse the membrane as a helical segment. Residues 787–796 (FIIANIPLPL) are Extracellular-facing. The chain crosses the membrane as a helical span at residues 797 to 817 (GTVTILCIDLGTDMVPAISLA). Residues 818 to 837 (YEAAESDIMKRQPRNPRTDK) are Cytoplasmic-facing. Residues 838-860 (LVNERLISMAYGQIGMIQALGGF) form a helical membrane-spanning segment. At 861–912 (FTYFVILAENGFLPARLLGVRLAWDDRSTNDLEDSYGQEWTYEQRKVVEFTC) the chain is on the extracellular side. Residues 913–932 (HTAFFASIVVVQWADLIICK) form a helical membrane-spanning segment. Residues 933-945 (TRRNSVFQQGMKN) are Cytoplasmic-facing. Phosphoserine; by PKA is present on S937. A helical transmembrane segment spans residues 946 to 964 (KILIFGLLEETALAAFLSY). Residues 965–979 (CPGMGVALRMYPLKV) are Extracellular-facing. A helical transmembrane segment spans residues 980–1000 (TWWFCAFPYSLLIFAYDEVRK). Residues 1001–1017 (LILRRYPGGWVEKETYY) lie on the Cytoplasmic side of the membrane.

The protein belongs to the cation transport ATPase (P-type) (TC 3.A.3) family. Type IIC subfamily. The sodium/potassium-transporting ATPase is composed of a catalytic alpha subunit, an auxiliary non-catalytic beta subunit and an additional regulatory subunit.

Its subcellular location is the membrane. It localises to the cell membrane. The enzyme catalyses K(+)(out) + Na(+)(in) + ATP + H2O = K(+)(in) + Na(+)(out) + ADP + phosphate + H(+). In terms of biological role, this is the catalytic component of the active enzyme, which catalyzes the hydrolysis of ATP coupled with the exchange of sodium and potassium ions across the plasma membrane. This action creates the electrochemical gradient of sodium and potassium ions, providing the energy for active transport of various nutrients. The protein is Sodium/potassium-transporting ATPase subunit alpha-2 (ATP1A2) of Gallus gallus (Chicken).